The primary structure comprises 318 residues: Pyrimidine-specific ribonucleoside hydrolase RihA (318 aa).

The active site involves His240.

The protein belongs to the IUNH family. RihA subfamily.

Hydrolyzes cytidine or uridine to ribose and cytosine or uracil, respectively. The protein is Pyrimidine-specific ribonucleoside hydrolase RihA of Shewanella baltica (strain OS155 / ATCC BAA-1091).